An 81-amino-acid polypeptide reads, in one-letter code: RNA-binding protein Hfq (81 aa).

A Sm domain is found at 9–68 (DPFLNVLRRERVPVFIYLINGIKLQGEIESFDKFVILLRNTVNQMIYKHAISTIVPSRVV).

Belongs to the Hfq family. As to quaternary structure, homohexamer.

Functionally, RNA chaperone that binds small regulatory RNA (sRNAs) and mRNAs to facilitate mRNA translational regulation in response to envelope stress, environmental stress and changes in metabolite concentrations. Also binds with high specificity to tRNAs. The sequence is that of RNA-binding protein Hfq from Blochmanniella pennsylvanica (strain BPEN).